The chain runs to 684 residues: 1,4-alpha-glucan-branching enzyme (684 aa).

Residues W88 and K123 each coordinate (1,4-alpha-D-glucosyl)n. Catalysis depends on D340, which acts as the Nucleophile. The active-site Proton donor is the E395.

Belongs to the glycosyl hydrolase 13 family. GlgB subfamily.

It is found in the cytoplasm. The enzyme catalyses Transfers a segment of a (1-&gt;4)-alpha-D-glucan chain to a primary hydroxy group in a similar glucan chain.. Its pathway is glycan biosynthesis; glycogen biosynthesis. Functionally, glycogen-branching enzyme participates in the glycogen biosynthetic process along with glycogenin and glycogen synthase. Generates alpha-1,6-glucosidic branches from alpha-1,4-linked glucose chains, to increase solubility of the glycogen polymer. The chain is 1,4-alpha-glucan-branching enzyme (be1) from Emericella nidulans (strain FGSC A4 / ATCC 38163 / CBS 112.46 / NRRL 194 / M139) (Aspergillus nidulans).